Reading from the N-terminus, the 257-residue chain is Regulator of G-protein signaling 7-binding protein (257 aa).

Residues 1–45 (MSSAPNGRKKRPSRSTRSSIFQISKPPLQTGDWERRGSGSESAHK) are disordered. The span at 32–45 (DWERRGSGSESAHK) shows a compositional bias: basic and acidic residues. The short motif at 242–247 (RRRKRR) is the Nuclear localization signal element. Residues Cys-252 and Cys-253 are each lipidated (S-palmitoyl cysteine).

This sequence belongs to the RGS7BP/RGS9BP family. Interacts with 'R7' family proteins RGS6, RGS7, RGS9 and RGS11. Component of some R7-Gbeta5 complex composed of some R7 protein (RGS6, RGS7, RGS9 or RGS11), Gbeta5 (GNB5) and RGS7BP. Palmitoylated. Undergoes rapid palmitoylation turnover. De novo and turnover palmitoylation are both mediated by ZDHHC2. Palmitoylation regulates the cell membrane and nuclear shuttling and the regulation of GPCR signaling. Upon depalmitoylation, it is targeted from the plasma membrane into the nucleus. GPCR signaling inhibits depalmitoylation and promotes localization to the plasma membrane.

It is found in the nucleus. It localises to the cytoplasm. The protein localises to the cell membrane. Its function is as follows. Regulator of G protein-coupled receptor (GPCR) signaling. Regulatory subunit of the R7-Gbeta5 complexes that acts by controlling the subcellular location of the R7-Gbeta5 complexes. When palmitoylated, it targets the R7-Gbeta5 complexes to the plasma membrane, leading to inhibit G protein alpha subunits. When it is unpalmitoylated, the R7-Gbeta5 complexes undergo a nuclear/cytoplasmic shuttling. May also act by controlling the proteolytic stability of R7 proteins, probably by protecting them from degradation. In Bos taurus (Bovine), this protein is Regulator of G-protein signaling 7-binding protein (RGS7BP).